The primary structure comprises 154 residues: Crossover junction endodeoxyribonuclease RuvC (154 aa).

Active-site residues include Asp7, Glu66, and Asp139. Positions 7, 66, and 139 each coordinate Mg(2+).

This sequence belongs to the RuvC family. Homodimer which binds Holliday junction (HJ) DNA. The HJ becomes 2-fold symmetrical on binding to RuvC with unstacked arms; it has a different conformation from HJ DNA in complex with RuvA. In the full resolvosome a probable DNA-RuvA(4)-RuvB(12)-RuvC(2) complex forms which resolves the HJ. Mg(2+) serves as cofactor.

The protein resides in the cytoplasm. It carries out the reaction Endonucleolytic cleavage at a junction such as a reciprocal single-stranded crossover between two homologous DNA duplexes (Holliday junction).. Functionally, the RuvA-RuvB-RuvC complex processes Holliday junction (HJ) DNA during genetic recombination and DNA repair. Endonuclease that resolves HJ intermediates. Cleaves cruciform DNA by making single-stranded nicks across the HJ at symmetrical positions within the homologous arms, yielding a 5'-phosphate and a 3'-hydroxyl group; requires a central core of homology in the junction. The consensus cleavage sequence is 5'-(A/T)TT(C/G)-3'. Cleavage occurs on the 3'-side of the TT dinucleotide at the point of strand exchange. HJ branch migration catalyzed by RuvA-RuvB allows RuvC to scan DNA until it finds its consensus sequence, where it cleaves and resolves the cruciform DNA. The sequence is that of Crossover junction endodeoxyribonuclease RuvC from Aliarcobacter butzleri (strain RM4018) (Arcobacter butzleri).